The following is a 207-amino-acid chain: Alpha-1-acid glycoprotein 2 (207 aa).

The signal sequence occupies residues methionine 1 to alanine 18. Position 19 is a pyrrolidone carboxylic acid (glutamine 19). N-linked (GlcNAc...) asparagine glycans are attached at residues asparagine 25, asparagine 34, asparagine 76, asparagine 94, and asparagine 104. Cysteine 91 and cysteine 184 are disulfide-bonded. The disordered stretch occupies residues glutamate 188–alanine 207.

This sequence belongs to the calycin superfamily. Lipocalin family. In terms of tissue distribution, expressed by the liver and secreted in plasma.

It is found in the secreted. In terms of biological role, functions as a transport protein in the blood stream. Binds various ligands in the interior of its beta-barrel domain. Appears to function in modulating the activity of the immune system during the acute-phase reaction. This is Alpha-1-acid glycoprotein 2 (Orm2) from Mus musculus (Mouse).